We begin with the raw amino-acid sequence, 242 residues long: MKATLVLGSLIVGAVSAYKATTTRYYDGQEGACGCGSSSGAFPWQLGIGNGVYTAAGSQALFDTAGASWCGAGCGKCYQLTSTGQAPCSSCGTGGAAGQSIIVMVTNLCPNNGNAQWCPVVGGTNQYGYSYHFDIMAQNEIFGDNVVVDFEPIACPGQAASDWGTCLCVGQQETDPTPVLGNDTGSTPPGSSPPATSSSPPSGGGQQTLYGQCGGAGWTGPTTCQAPGTCKVQNQWYSQCLP.

The N-terminal stretch at 1–17 (MKATLVLGSLIVGAVSA) is a signal peptide. The tract at residues 18 to 182 (YKATTTRYYD…ETDPTPVLGN (165 aa)) is catalytic. Aspartate 27 (nucleophile) is an active-site residue. Aspartate 134 (proton donor) is an active-site residue. The interval 177–206 (TPVLGNDTGSTPPGSSPPATSSSPPSGGGQ) is disordered. An N-linked (GlcNAc...) asparagine glycan is attached at asparagine 182. The segment covering 184–201 (TGSTPPGSSPPATSSSPP) has biased composition (low complexity). Positions 205 to 241 (GQQTLYGQCGGAGWTGPTTCQAPGTCKVQNQWYSQCL) constitute a CBM1 domain. 2 disulfide bridges follow: cysteine 213-cysteine 230 and cysteine 224-cysteine 240.

It belongs to the glycosyl hydrolase 45 (cellulase K) family.

The enzyme catalyses Endohydrolysis of (1-&gt;4)-beta-D-glucosidic linkages in cellulose, lichenin and cereal beta-D-glucans.. This Hypocrea jecorina (Trichoderma reesei) protein is Endoglucanase-5 (egl5).